The chain runs to 264 residues: S-adenosylmethionine decarboxylase proenzyme (264 aa).

Ser-113 functions as the Schiff-base intermediate with substrate; via pyruvic acid in the catalytic mechanism. The residue at position 113 (Ser-113) is a Pyruvic acid (Ser); by autocatalysis. His-118 functions as the Proton acceptor; for processing activity in the catalytic mechanism. Residue Cys-141 is the Proton donor; for catalytic activity of the active site.

It belongs to the prokaryotic AdoMetDC family. Type 2 subfamily. In terms of assembly, heterooctamer of four alpha and four beta chains arranged as a tetramer of alpha/beta heterodimers. Pyruvate serves as cofactor. Post-translationally, is synthesized initially as an inactive proenzyme. Formation of the active enzyme involves a self-maturation process in which the active site pyruvoyl group is generated from an internal serine residue via an autocatalytic post-translational modification. Two non-identical subunits are generated from the proenzyme in this reaction, and the pyruvate is formed at the N-terminus of the alpha chain, which is derived from the carboxyl end of the proenzyme. The post-translation cleavage follows an unusual pathway, termed non-hydrolytic serinolysis, in which the side chain hydroxyl group of the serine supplies its oxygen atom to form the C-terminus of the beta chain, while the remainder of the serine residue undergoes an oxidative deamination to produce ammonia and the pyruvoyl group blocking the N-terminus of the alpha chain.

The catalysed reaction is S-adenosyl-L-methionine + H(+) = S-adenosyl 3-(methylsulfanyl)propylamine + CO2. It functions in the pathway amine and polyamine biosynthesis; S-adenosylmethioninamine biosynthesis; S-adenosylmethioninamine from S-adenosyl-L-methionine: step 1/1. Functionally, catalyzes the decarboxylation of S-adenosylmethionine to S-adenosylmethioninamine (dcAdoMet), the propylamine donor required for the synthesis of the polyamines spermine and spermidine from the diamine putrescine. The chain is S-adenosylmethionine decarboxylase proenzyme from Pseudomonas syringae pv. tomato (strain ATCC BAA-871 / DC3000).